The sequence spans 502 residues: Glycerol kinase (502 aa).

Thr14 contacts ADP. The ATP site is built by Thr14, Thr15, and Ser16. Thr14 provides a ligand contact to sn-glycerol 3-phosphate. Arg18 contributes to the ADP binding site. Sn-glycerol 3-phosphate-binding residues include Arg84, Glu85, Tyr136, and Asp246. Residues Arg84, Glu85, Tyr136, Asp246, and Gln247 each coordinate glycerol. 2 residues coordinate ADP: Thr268 and Gly311. Positions 268, 311, 315, and 412 each coordinate ATP. The ADP site is built by Gly412 and Asn416.

The protein belongs to the FGGY kinase family. In terms of assembly, homotetramer and homodimer (in equilibrium). Heterodimer with EIIA-Glc. Binds 1 zinc ion per glycerol kinase EIIA-Glc dimer. The zinc ion is important for dimerization.

It carries out the reaction glycerol + ATP = sn-glycerol 3-phosphate + ADP + H(+). The protein operates within polyol metabolism; glycerol degradation via glycerol kinase pathway; sn-glycerol 3-phosphate from glycerol: step 1/1. Activity of this regulatory enzyme is affected by several metabolites. Allosterically and non-competitively inhibited by fructose 1,6-bisphosphate (FBP) and unphosphorylated phosphocarrier protein EIIA-Glc (III-Glc), an integral component of the bacterial phosphotransferase (PTS) system. Functionally, key enzyme in the regulation of glycerol uptake and metabolism. Catalyzes the phosphorylation of glycerol to yield sn-glycerol 3-phosphate. In Salmonella typhimurium (strain LT2 / SGSC1412 / ATCC 700720), this protein is Glycerol kinase.